Consider the following 410-residue polypeptide: Chitinase-3-like protein 1 (410 aa).

Residues 1–48 (MGVKAAQTGIWASQGQSIRVVGFQAQTAHRAICLLGFVVLVLLQCCSA) form the signal peptide. In terms of domain architecture, GH18 spans 49-410 (YKLVCYYTSW…NAIKDALAAT (362 aa)). An intrachain disulfide couples Cys53 to Cys78. Asn87 carries an N-linked (GlcNAc...) asparagine glycan. Chitin-binding positions include 97–98 (EW), 124–127 (GGWN), Tyr168, 231–234 (MTYD), and Arg290. An intrachain disulfide couples Cys327 to Cys391. Residues 351–365 (QWVGYDDQESVKSKV) form an important for AKT1 activation and IL8 production region. Chitin is bound at residue Trp379.

Belongs to the glycosyl hydrolase 18 family. Monomer.

The protein resides in the secreted. The protein localises to the extracellular space. It localises to the cytoplasm. Its subcellular location is the perinuclear region. It is found in the endoplasmic reticulum. In terms of biological role, carbohydrate-binding lectin with a preference for chitin. Has no chitinase activity. May play a role in tissue remodeling and in the capacity of cells to respond to and cope with changes in their environment. Plays a role in T-helper cell type 2 (Th2) inflammatory response and IL-13-induced inflammation, regulating allergen sensitization, inflammatory cell apoptosis, dendritic cell accumulation and M2 macrophage differentiation. Facilitates invasion of pathogenic enteric bacteria into colonic mucosa and lymphoid organs. Mediates activation of AKT1 signaling pathway and subsequent IL8 production in colonic epithelial cells. Regulates antibacterial responses in lung by contributing to macrophage bacterial killing, controlling bacterial dissemination and augmenting host tolerance. Also regulates hyperoxia-induced injury, inflammation and epithelial apoptosis in lung. This is Chitinase-3-like protein 1 (CHI3L1) from Pongo abelii (Sumatran orangutan).